We begin with the raw amino-acid sequence, 2039 residues long: MSRSRPAKPSKSVKTKLQKKKDIQMKTKTSKQAVRHGASAKAVNPGKPKQLIKRRDGKKETEDKTPTPAPSFLTRAGAARMNRDRNQVLFQNPDSLTCNGFTMALRRTSLSWRLSQRPVVTPKPKKVPPSKKQCTHNIQDEPGVKHSENDSVPSQHATVSPGTENGEQNRCLVEGESQEITQSCPVFEERIEDTQSCISASGNLEAEISWPLEGTHCEELLSHQTSDNECTSPQECAPLPQRSTSEVTSQKNTSNQLADLSSQVESIKLSDPSPNPTGSDHNGFPDSSFRIVPELDLKTCMPLDESVYPTALIRFILAGSQPDVFDTKPQEKTLITTPEQVGSHPNQVLDATSVLGQAFSTLPLQWGFSGANLVQVEALGKGSDSPEDLGAITMLNQQETVAMDMDRNATPDLPIFLPKPPNTVATYSSPLLGPEPHSSTSCGLEVQGATPILTLDSGHTPQLPPNPESSSVPLVIAANGTRAEKQFGTSLFPAVPQGFTVAAENEVQHAPLDLTQGSQAAPSKLEGEISRVSITGSADVKATAMSMPVTQASTSSPPCNSTPPMVERRKRKACGVCEPCQQKANCGECTYCKNRKNSHQICKKRKCEVLKKKPEATSQAQVTKENKRPQREKKPKVLKTDFNNKPVNGPKSESMDCSRRGHGEEEQRLDLITHPLENVRKNAGGMTGIEVEKWAPNKKSHLAEGQVKGSCDANLTGVENPQPSEDDKQQTNPSPTFAQTIRNGMKNVHCLPTDTHLPLNKLNHEEFSKALGNNSSKLLTDPSNCKDAMSVTTSGGECDHLKGPRNTLLFQKPGLNCRSGAEPTIFNNHPNTHSAGSRPHPPEKVPNKEPKDGSPVQPSLLSLMKDRRLTLEQVVAIEALTQLSEAPSESSSPSKPEKDEEAHQKTASLLNSCKAILHSVRKDLQDPNVQGKGLHHDTVVFNGQNRTFKSPDSFATNQALIKSQGYPSSPTAEKKGAAGGRAPFDGFENSHPLPIESHNLENCSQVLSCDQNLSSHDPSCQDAPYSQIEEDVAAQLTQLASTINHINAEVRNAESTPESLVAKNTKQKHSQEKRMVHQKPPSSTQTKPSVPSAKPKKAQKKARATPHANKRKKKPPARSSQENDQKKQEQLAIEYSKMHDIWMSSKFQRFGQSSPRSFPVLLRNIPVFNQILKPVTQSKTPSQHNELFPPINQIKFTRNPELAKEKVKVEPSDSLPTCQFKTESGGQTFAEPADNSQGQPMVSVNQEAHPLPQSPPSNQCANIMAGAAQTQFHLGAQENLVHQIPPPTLPGTSPDTLLPDPASILRKGKVLHFDGITVVTEKREAQTSSNGPLGPTTDSAQSEFKESIMDLLSKPAKNLIAGLKEQEAAPCDCDGGTQKEKGPYYTHLGAGPSVAAVRELMETRFGQKGKAIRIEKIVFTGKEGKSSQGCPVAKWVIRRSGPEEKLICLVRERVDHHCSTAVIVVLILLWEGIPRLMADRLYKELTENLRSYSGHPTDRRCTLNKKRTCTCQGIDPKTCGASFSFGCSWSMYFNGCKFGRSENPRKFRLAPNYPLHNYYKRITGMSSEGSDVKTGWIIPDRKTLISREEKQLEKNLQELATVLAPLYKQMAPVAYQNQVEYEEVAGDCRLGNEEGRPFSGVTCCMDFCAHSHKDIHNMHNGSTVVCTLIRADGRDTNCPEDEQLHVLPLYRLADTDEFGSVEGMKAKIKSGAIQVNGPTRKRRLRFTEPVPRCGKRAKMKQNHNKSGSHNTKSFSSASSTSHLVKDESTDFCPLQASSAETSTCTYSKTASGGFAETSSILHCTMPSGAHSGANAAAGECTGTVQPAEVAAHPHQSLPTADSPVHAEPLTSPSEQLTSNQSNQQLPLLSNSQKLASCQVEDERHPEADEPQHPEDDNLPQLDEFWSDSEEIYADPSFGGVAIAPIHGSVLIECARKELHATTSLRSPKRGVPFRVSLVFYQHKSLNKPNHGFDINKIKCKCKKVTKKKPADRECPDVSPEANLSHQIPSRVASTLTRDNVVTVSPYSLTHVAGPYNRWV.

The span at 1–19 (MSRSRPAKPSKSVKTKLQK) shows a compositional bias: basic residues. Disordered regions lie at residues 1–79 (MSRS…AGAA), 119–168 (VVTP…NGEQ), and 227–286 (DNEC…GFPD). Basic and acidic residues-rich tracts occupy residues 53-65 (KRRD…EDKT) and 138-149 (IQDEPGVKHSEN). Polar residues-rich tracts occupy residues 150–168 (DSVP…NGEQ) and 241–265 (QRST…SQVE). A sufficient for binding to genomic CpG islands region spans residues 512–657 (LDLTQGSQAA…NGPKSESMDC (146 aa)). The segment at 567–608 (ERRKRKACGVCEPCQQKANCGECTYCKNRKNSHQICKKRKCE) adopts a CXXC-type zinc-finger fold. 8 residues coordinate Zn(2+): Cys-574, Cys-577, Cys-580, Cys-586, Cys-589, Cys-592, Cys-602, and Cys-607. 8 disordered regions span residues 613–670 (KPEA…QRLD), 711–735 (CDAN…NPSP), 820–859 (GAEP…VQPS), 882–906 (QLSE…HQKT), 964–993 (QGYP…SHPL), 1050–1129 (VRNA…KKQE), 1209–1240 (VEPS…QGQP), and 1322–1341 (KREA…DSAQ). Residues 653 to 670 (ESMDCSRRGHGEEEQRLD) are compositionally biased toward basic and acidic residues. Residues 825–835 (IFNNHPNTHSA) show a composition bias toward polar residues. Basic and acidic residues predominate over residues 840–852 (HPPEKVPNKEPKD). Ser-854 is modified (phosphoserine). Over residues 884–894 (SEAPSESSSPS) the composition is skewed to low complexity. Basic and acidic residues predominate over residues 895–904 (KPEKDEEAHQ). The segment covering 1053-1064 (AESTPESLVAKN) has biased composition (polar residues). A compositionally biased stretch (basic residues) spans 1094-1116 (KPKKAQKKARATPHANKRKKKPP). Polar residues-rich tracts occupy residues 1214 to 1227 (SLPT…SGGQ) and 1326 to 1341 (QTSS…DSAQ). The Zn(2+) site is built by Cys-1371, Cys-1373, Cys-1430, His-1456, and Cys-1458. 2-oxoglutarate is bound at residue Arg-1499. Residues Cys-1509, Cys-1511, Cys-1527, and Cys-1536 each contribute to the Zn(2+) site. The interval 1528–1541 (SWSMYFNGCKFGRS) is interaction with DNA. Lys-1537 participates in a covalent cross-link: Glycyl lysine isopeptide (Lys-Gly) (interchain with G-Cter in ubiquitin). Zn(2+) is bound at residue Cys-1628. Residue Cys-1644 coordinates 2-oxoglutarate. Residue His-1650 participates in Zn(2+) binding. Positions 1652 and 1654 each coordinate Fe cation. Asn-1657 serves as a coordination point for substrate. A 2-oxoglutarate-binding site is contributed by His-1685. The span at 1734 to 1743 (GKRAKMKQNH) shows a compositional bias: basic residues. Disordered stretches follow at residues 1734-1760 (GKRA…ASST) and 1830-1901 (AAHP…LPQL). Residues 1748–1760 (SHNTKSFSSASST) are compositionally biased toward low complexity. Residues 1850–1875 (TSPSEQLTSNQSNQQLPLLSNSQKLA) are compositionally biased toward polar residues. Residues 1880-1895 (EDERHPEADEPQHPED) are compositionally biased toward basic and acidic residues. Residue His-1939 participates in Fe cation binding. Residue 1954-1956 (RVS) participates in 2-oxoglutarate binding. Residue 1960–1962 (YQH) coordinates substrate. Zn(2+) is bound at residue His-1970.

This sequence belongs to the TET family. In terms of assembly, interacts with SIN3A; recruits the transcriptional co-repressor SIN3A to gene promoters. Interacts with HCFC1. Interacts (via C-terminus) with OGT. Found in a complex composed of at least SINHCAF, SIN3A, HDAC1, SAP30, RBBP4, OGT and TET1. Interacts with QSER1. Interacts with NONO (via DNA-binding domain); this interaction recruits TET1 to genomic loci. Interacts with FOXA2; this interaction may recruit TET1 to specific enhancers to preserve their unmethylated status and hence allowing gene expression. Interacts with RNF2. Directly interacts (via C-terminus) with the DCAF1 component of the CRL4(VprBP) E3 ubiquitin-protein ligase complex. As to quaternary structure, interacts with UHRF1; this interaction induces the recruitment of TET1 to replicating heterochromatin. Interacts with DCAF1. Fe(2+) serves as cofactor. Requires Zn(2+) as cofactor. Glycosylated. Interaction with OGT leads to GlcNAcylation. In terms of processing, monoubiquitinated by the DCX (DDB1-CUL4-X-box) E3 ubiquitin-protein ligase complex called CRL4(VprBP) or CUL4A-RBX1-DDB1-DCAF1/VPRBP complex. Post-translationally, monoubiquitinated by the DCX (DDB1-CUL4-X-box) E3 ubiquitin-protein ligase complex called CRL4(VprBP) or CUL4A-RBX1-DDB1-DCAF1/VPRBP complex; this modification promotes binding to DNA. As to expression, expressed in germinal vesicle (GV) stage and MII-stage oocytes and in early embryos. Also detected somatic tissues, including brain, liver and kidney, but at very low levels. Predominantly expressed in early embryos. Also expressed in embryonic stem cells and in primordial germ cells. Expressed in adult tissues, including brain cortex, cerebellum, heart, kidney, liver, muscle and spleen, although at much lower levels than isoform 2. In the brain, expressed at higher levels in glial cells than in neurons. Expressed in placenta. Expressed in the pituitary, most probably in thyrotropes. In terms of tissue distribution, preferentially expressed in differentiated cells, including in cerebral cortex, cerebellum and thymus. Also expressed in heart, kidney, liver, muscle and spleen at much higher levels than isoform 1. In the brain, expressed at higher levels in neurons than in glial cells. Expressed in the olfactory bulb and in the mammary gland.

The protein localises to the nucleus. It is found in the chromosome. It carries out the reaction a 5-methyl-2'-deoxycytidine in DNA + 2-oxoglutarate + O2 = a 5-hydroxymethyl-2'-deoxycytidine in DNA + succinate + CO2. It catalyses the reaction a 5-hydroxymethyl-2'-deoxycytidine in DNA + 2-oxoglutarate + O2 = a 5-formyl-2'-deoxycytidine in DNA + succinate + CO2 + H2O. The enzyme catalyses a 5-formyl-2'-deoxycytidine in DNA + 2-oxoglutarate + O2 = a 5-carboxyl-2'-deoxycytidine in DNA + succinate + CO2 + H(+). Dioxygenase that plays a key role in active DNA demethylation, by catalyzing the sequential oxidation of the modified genomic base 5-methylcytosine (5mC) into 5-hydroxymethylcytosine (5hmC), 5-formylcytosine (5fC), and 5-carboxylcytosine (5caC). In addition to its role in DNA demethylation, plays a more general role in chromatin regulation by recruiting histone modifying protein complexes to alter histone marks and chromatin accessibility, leading to both activation and repression of gene expression. Plays therefore a role in many biological processes, including stem cell maintenance, T- and B-cell development, inflammation regulation, iron homeostasis, neural activity or DNA repair. Involved in the balance between pluripotency and lineage commitment of cells it plays a role in embryonic stem cells maintenance and inner cell mass cell specification. Together with QSER1, plays an essential role in the protection and maintenance of transcriptional and developmental programs to inhibit the binding of DNMT3A/3B and therefore de novo methylation. May play a role in the pancreatic beta-cell specification during development. In this context, may function as an upstream epigenetic regulator of PAX4 presumably through direct recruitment by FOXA2 to a PAX4 enhancer to preserve its unmethylated status, thereby potentiating PAX4 expression to adopt beta-cell fate during endocrine lineage commitment. Under DNA hypomethylation conditions, such as in female meiotic germ cells, may induce epigenetic reprogramming of pericentromeric heterochromatin (PCH), the constitutive heterochromatin of pericentromeric regions. PCH forms chromocenters in the interphase nucleus and chromocenters cluster at the prophase of meiosis. In this context, may also be essential for chromocenter clustering in a catalytic activity-independent manner, possibly through the recruitment polycomb repressive complex 1 (PRC1) to the chromocenters. During embryonic development, may be required for normal meiotic progression in oocytes and meiotic gene activation. Binds preferentially to DNA containing cytidine-phosphate-guanosine (CpG) dinucleotides over CpH (H=A, T, and C), hemimethylated-CpG and hemimethylated-hydroxymethyl-CpG. In terms of biological role, dioxygenase that plays a key role in active DNA demethylation. Binds to promoters, particularly to those with high CG content. In hippocampal neurons, isoform 1 regulates the expression of a unique subset of genes compared to isoform 2, although some overlap between both isoforms, hence differentially regulates excitatory synaptic transmission. In hippocampal neuron cell cultures, isoform 1 controls both miniature excitatory postsynaptic current amplitude and frequency. Isoform 1 may regulate genes involved in hippocampal-dependent memory, leading to positive regulation of memory, contrary to isoform 2 that may decrease memory. Its function is as follows. Dioxygenase that plays a key role in active DNA demethylation. As isoform 1, binds to promoters, particularly to those with high CG content, however displays reduced global chromatin affinity compared with isoform 1, leading to decreased global DNA demethylation compared with isoform 1. Contrary to isoform 1, isoform 2 localizes during S phase to sites of ongoing DNA replication in heterochromatin, causing a significant de novo 5hmC formation, globally, and more so in heterochromatin, including LINE 1 interspersed DNA repeats leading to their activation. In hippocampal neurons, isoform 2 regulates the expression of a unique subset of genes compared with isoform 1, although some overlap between both isoforms, hence differentially regulating excitatory synaptic transmission. In hippocampal neuron cell cultures, isoform 2 controls miniature excitatory postsynaptic current frequency, but not amplitude. Isoform 2 may regulate genes involved in hippocampal-dependent memory, leading to negative regulation of memory, contrary to isoform 1 that may improve memory. In immature and partially differentiated gonadotrope cells, represses luteinizing hormone gene LHB expression directly and does not catalyze 5hmC at the gene promoter. In Mus musculus (Mouse), this protein is Methylcytosine dioxygenase TET1 (Tet1).